Reading from the N-terminus, the 336-residue chain is F420-dependent glucose-6-phosphate dehydrogenase (336 aa).

D39 contacts coenzyme F420-(gamma-Glu)n. Residue H40 is the Proton donor of the active site. Coenzyme F420-(gamma-Glu)n contacts are provided by residues T76 and 107-108; that span reads TG. The Proton acceptor role is filled by E109. Residues N112, 177–178, and 180–181 contribute to the coenzyme F420-(gamma-Glu)n site; these read GG and AV. Positions 195, 198, 259, and 283 each coordinate substrate.

This sequence belongs to the F420-dependent glucose-6-phosphate dehydrogenase family. In terms of assembly, homodimer.

The enzyme catalyses oxidized coenzyme F420-(gamma-L-Glu)(n) + D-glucose 6-phosphate + H(+) = 6-phospho-D-glucono-1,5-lactone + reduced coenzyme F420-(gamma-L-Glu)(n). Functionally, catalyzes the coenzyme F420-dependent oxidation of glucose 6-phosphate (G6P) to 6-phosphogluconolactone. Appears to have a role in resistance to oxidative stress, via its consumption of G6P that serves as a source of reducing power to combat oxidative stress in mycobacteria. More precisely, is likely involved in a F420-dependent anti-oxidant mechanism that protects M.tuberculosis against oxidative stress and bactericidal agents. In terms of biological role, is essential for the bioreductive activation of the bicyclic 4-nitroimidazole prodrug PA-824 (nitroimidazo-oxazine) developed for anti-tuberculosis therapy against both replicating and persistent bacteria. It does not interact directly with PA-824 but, rather, provides reduced F420 to the deazaflavin-dependent nitroreductase Ddn, which in turn activates PA-824. The polypeptide is F420-dependent glucose-6-phosphate dehydrogenase (fgd1) (Mycobacterium tuberculosis (strain CDC 1551 / Oshkosh)).